The sequence spans 96 residues: Cytochrome c-553 (96 aa).

The first 19 residues, 1-19 (MKKVIMALGVLAFANALMA), serve as a signal peptide directing secretion. Residues Cys-29, Cys-32, His-33, and Met-73 each contribute to the heme c site.

This sequence belongs to the cytochrome c family. Post-translationally, binds 1 heme c group covalently per subunit.

The protein localises to the periplasm. Natural electron acceptor for a formate dehydrogenase. The sequence is that of Cytochrome c-553 from Helicobacter pylori (strain ATCC 700392 / 26695) (Campylobacter pylori).